A 406-amino-acid polypeptide reads, in one-letter code: 11-beta-hydroxysteroid dehydrogenase type 2 (406 aa).

An NAD(+)-binding site is contributed by 82–111; it reads TRAVLITGCDSGFGKETAKKLDAMGFTVLA. Residue Ser-219 coordinates substrate. The active-site Proton acceptor is Tyr-232. Residues 379–406 form a disordered region; the sequence is GQPGATPAPDTAQDNPNPNPDPSLVGAR.

Belongs to the short-chain dehydrogenases/reductases (SDR) family. In terms of assembly, interacts with ligand-free cytoplasmic NR3C2. Highly expressed in the kidney.

The protein localises to the microsome. The protein resides in the endoplasmic reticulum. The enzyme catalyses an 11beta-hydroxysteroid + NAD(+) = an 11-oxosteroid + NADH + H(+). The catalysed reaction is corticosterone + NAD(+) = 11-dehydrocorticosterone + NADH + H(+). It catalyses the reaction cortisol + NAD(+) = cortisone + NADH + H(+). It carries out the reaction 11beta,17beta-dihydroxyandrost-4-ene-3-one + NAD(+) = 17beta-hydroxyandrost-4-ene-3,11-dione + NADH + H(+). The enzyme catalyses 11beta-hydroxyandrost-4-ene-3,17-dione + NAD(+) = androst-4-ene-3,11,17-trione + NADH + H(+). The protein operates within steroid metabolism. With respect to regulation, inhibited by carbenoloxone. Its function is as follows. Catalyzes the conversion of biologically active 11beta-hydroxyglucocorticoids (11beta-hydroxysteroid) such as corticosterone, to inactive 11-ketoglucocorticoids (11-oxosteroid) such as 11-dehydrocorticosterone, in the presence of NAD(+). Functions as a dehydrogenase (oxidase), thereby decreasing the concentration of active glucocorticoids, thus protecting the nonselective mineralocorticoid receptor from occupation by glucocorticoids. Plays an important role in maintaining glucocorticoids balance during preimplantation and protects the fetus from excessive maternal corticosterone exposure. Catalyzes the oxidation of 11beta-hydroxytestosterone (11beta,17beta-dihydroxyandrost-4-ene-3-one) to 11-ketotestosterone (17beta-hydroxyandrost-4-ene-3,11-dione), a major bioactive androgen. Catalyzes the conversion of 11beta-hydroxyandrostenedione (11beta-hydroxyandrost-4-ene-3,17-dione) to 11-ketoandrostenedione (androst-4-ene-3,11,17-trione), which can be further metabolized to 11-ketotestosterone. Converts 7-beta-25-dihydroxycholesterol to 7-oxo-25-hydroxycholesterol in vitro. 7-beta-25-dihydroxycholesterol (not 7-oxo-25-hydroxycholesterol) acts as a ligand for the G-protein-coupled receptor (GPCR) Epstein-Barr virus-induced gene 2 (EBI2) and may thereby regulate immune cell migration. May protect ovulating oocytes and fertilizing spermatozoa from the adverse effects of cortisol. The sequence is that of 11-beta-hydroxysteroid dehydrogenase type 2 (HSD11B2) from Oryctolagus cuniculus (Rabbit).